Here is a 390-residue protein sequence, read N- to C-terminus: Flap endonuclease 1 (390 aa).

Residues 1 to 111 are N-domain; that stretch reads MGIKGLAKLL…GELLKRREKR (111 aa). Aspartate 34 provides a ligand contact to Mg(2+). 2 residues coordinate DNA: arginine 47 and arginine 77. Residues aspartate 93, glutamate 165, glutamate 167, aspartate 186, and aspartate 188 each contribute to the Mg(2+) site. An I-domain region spans residues 129–260; sequence EQDKQSKRLV…KTALKLIREH (132 aa). Glutamate 165 is a DNA binding site. DNA contacts are provided by glycine 238 and aspartate 240. A Mg(2+)-binding site is contributed by aspartate 240. A disordered region spans residues 342 to 390; that stretch reads KPQSRMDSFFKVKANPEGDKKKAEKRKAELAASRGKGKKGKGGGGFKKK. An interaction with PCNA region spans residues 343–351; that stretch reads PQSRMDSFF. Residues 349-370 show a composition bias toward basic and acidic residues; it reads SFFKVKANPEGDKKKAEKRKAE. Residues 376–390 show a composition bias toward basic residues; the sequence is GKGKKGKGGGGFKKK.

The protein belongs to the XPG/RAD2 endonuclease family. FEN1 subfamily. In terms of assembly, interacts with PCNA. Three molecules of FEN1 bind to one PCNA trimer with each molecule binding to one PCNA monomer. PCNA stimulates the nuclease activity without altering cleavage specificity. The cofactor is Mg(2+). Phosphorylated. Phosphorylation upon DNA damage induces relocalization to the nuclear plasma.

It is found in the nucleus. Its subcellular location is the nucleolus. The protein resides in the nucleoplasm. The protein localises to the mitochondrion. Its function is as follows. Structure-specific nuclease with 5'-flap endonuclease and 5'-3' exonuclease activities involved in DNA replication and repair. During DNA replication, cleaves the 5'-overhanging flap structure that is generated by displacement synthesis when DNA polymerase encounters the 5'-end of a downstream Okazaki fragment. It enters the flap from the 5'-end and then tracks to cleave the flap base, leaving a nick for ligation. Also involved in the long patch base excision repair (LP-BER) pathway, by cleaving within the apurinic/apyrimidinic (AP) site-terminated flap. Acts as a genome stabilization factor that prevents flaps from equilibrating into structures that lead to duplications and deletions. Also possesses 5'-3' exonuclease activity on nicked or gapped double-stranded DNA, and exhibits RNase H activity. Also involved in replication and repair of rDNA and in repairing mitochondrial DNA. The sequence is that of Flap endonuclease 1 from Thalassiosira pseudonana (Marine diatom).